Here is a 486-residue protein sequence, read N- to C-terminus: Cardiolipin synthase A (486 aa).

The next 2 helical transmembrane spans lie at 3–23 (TFYT…IAGV) and 38–58 (MAWL…YLSV). 2 consecutive PLD phosphodiesterase domains span residues 219-246 (MDLR…VDPR) and 399-426 (EGGL…DMRS). Active-site residues include His-224, Lys-226, Asp-231, His-404, Lys-406, and Asp-411.

It belongs to the phospholipase D family. Cardiolipin synthase subfamily. ClsA sub-subfamily.

Its subcellular location is the cell inner membrane. It carries out the reaction 2 a 1,2-diacyl-sn-glycero-3-phospho-(1'-sn-glycerol) = a cardiolipin + glycerol. Its function is as follows. Catalyzes the reversible phosphatidyl group transfer from one phosphatidylglycerol molecule to another to form cardiolipin (CL) (diphosphatidylglycerol) and glycerol. This Salmonella paratyphi A (strain ATCC 9150 / SARB42) protein is Cardiolipin synthase A.